Here is a 142-residue protein sequence, read N- to C-terminus: Deoxyuridine 5'-triphosphate nucleotidohydrolase (142 aa).

Substrate-binding positions include 62 to 64 (RSG), asparagine 75, and 79 to 81 (TID).

The protein belongs to the dUTPase family. It depends on Mg(2+) as a cofactor.

It catalyses the reaction dUTP + H2O = dUMP + diphosphate + H(+). It functions in the pathway pyrimidine metabolism; dUMP biosynthesis; dUMP from dCTP (dUTP route): step 2/2. In terms of biological role, this enzyme is involved in nucleotide metabolism: it produces dUMP, the immediate precursor of thymidine nucleotides and it decreases the intracellular concentration of dUTP so that uracil cannot be incorporated into DNA. The chain is Deoxyuridine 5'-triphosphate nucleotidohydrolase from Trichodesmium erythraeum (strain IMS101).